Reading from the N-terminus, the 607-residue chain is Autophagy-related protein 16-1 (607 aa).

The interval 13-43 (WKRHISEQLRRRDRLQRQAFEEIILQYNKLL) is interaction with ATG5. Positions 78-230 (NDNQLQEMAQ…QKELAEAAKE (153 aa)) form a coiled coil. Serine 139 is subject to Phosphoserine; by CK2. The tract at residues 207–230 (AENEKDSRRRQARLQKELAEAAKE) is WIPI2-binding. Residues 230 to 242 (EPLPVEQDDDIEV) form an RB1CC1-binding region. Phosphoserine occurs at positions 269 and 287. The Caspase cleavage motif lies at 296–299 (DNVD). 7 WD repeats span residues 320-359 (AHDG…CEFK), 364-403 (GSNA…LRHT), 406-445 (GHSG…CIKT), 447-484 (FAGS…IVRE), 486-525 (ELLG…IKQT), 532-573 (KCGS…KVLS), and 575-607 (QHSS…WAQY).

Belongs to the WD repeat ATG16 family. Homodimer. Homooligomer. Heterooligomer with ATG16L2. Interacts with WIPI1. Interacts with WIPI2. Interacts with RB1CC1; the interaction is required for ULK1 complex-dependent autophagy. Interacts with ATG5. Part of the minor complex composed of 4 sets of ATG12-ATG5 and ATG16L1 (400 kDa); this complex interacts with ATG3 leading to disruption of ATG7 interaction and promotion of ATG8-like proteins lipidation. Part of the major complex composed of 8 sets of ATG12-ATG5 and ATG16L1 (800 kDa). Interacts with RAB33B (GTP- and GDP-bound forms); the complex consists of a tetramer where two RAB33B molecules bind independently one molecule of the ATG16L1 homodimer; the interaction promotes ATG12-ATG5-ATG16L1 complex recruitment to phagophores. Interacts (via WD repeats) with TMEM59; the interaction mediates unconventional autophagic activity of TMEM59. Interacts with TLR2. Interacts (via WD repeats) with MEFV. Interacts with PPP1CA; the interaction dephosphorylates ATG16L1 causing dissociation of ATG12-ATG5-ATG16L1 complex. Interacts (via N-terminal) with CLTC. Interacts with NOD1. Interacts with NOD2. Interacts with TUFM. Interacts with TRIM16. Interacts (via WD repeats) with SPATA33. Interacts with IRGM. In terms of processing, proteolytic cleavage by activated CASP3 leads to degradation and may regulate autophagy upon cellular stress and apoptotic stimuli. Post-translationally, phosphorylation at Ser-139 promotes association with the ATG12-ATG5 conjugate to form the ATG12-ATG5-ATG16L1 complex.

Its subcellular location is the cytoplasm. The protein localises to the preautophagosomal structure membrane. The protein resides in the endosome membrane. It is found in the lysosome membrane. Plays an essential role in both canonical and non-canonical autophagy: interacts with ATG12-ATG5 to mediate the lipidation to ATG8 family proteins (MAP1LC3A, MAP1LC3B, MAP1LC3C, GABARAPL1, GABARAPL2 and GABARAP). Acts as a molecular hub, coordinating autophagy pathways via distinct domains that support either canonical or non-canonical signaling. During canonical autophagy, interacts with ATG12-ATG5 to mediate the conjugation of phosphatidylethanolamine (PE) to ATG8 proteins, to produce a membrane-bound activated form of ATG8. Thereby, controls the elongation of the nascent autophagosomal membrane. As part of the ATG8 conjugation system with ATG5 and ATG12, required for recruitment of LRRK2 to stressed lysosomes and induction of LRRK2 kinase activity in response to lysosomal stress. Also involved in non-canonical autophagy, a parallel pathway involving conjugation of ATG8 proteins to single membranes at endolysosomal compartments, probably by catalyzing conjugation of phosphatidylserine (PS) to ATG8. Non-canonical autophagy plays a key role in epithelial cells to limit lethal infection by influenza A (IAV) virus. Regulates mitochondrial antiviral signaling (MAVS)-dependent type I interferon (IFN-I) production. Negatively regulates NOD1- and NOD2-driven inflammatory cytokine response. Instead, promotes an autophagy-dependent antibacterial pathway together with NOD1 or NOD2. Plays a role in regulating morphology and function of Paneth cell. In Homo sapiens (Human), this protein is Autophagy-related protein 16-1.